The following is a 376-amino-acid chain: N-acetyldiaminopimelate deacetylase (376 aa).

Asp-69 is an active-site residue. Glu-128 functions as the Proton acceptor in the catalytic mechanism.

It belongs to the peptidase M20A family. N-acetyldiaminopimelate deacetylase subfamily.

It carries out the reaction N-acetyl-(2S,6S)-2,6-diaminopimelate + H2O = (2S,6S)-2,6-diaminopimelate + acetate. Its pathway is amino-acid biosynthesis; L-lysine biosynthesis via DAP pathway; LL-2,6-diaminopimelate from (S)-tetrahydrodipicolinate (acetylase route): step 3/3. Functionally, catalyzes the conversion of N-acetyl-diaminopimelate to diaminopimelate and acetate. The sequence is that of N-acetyldiaminopimelate deacetylase from Bacillus thuringiensis subsp. konkukian (strain 97-27).